The sequence spans 286 residues: MRQPADGWREQALAEARVHDIDAAEIDYLIEAVTGLDRLRVRLGGPQALEAHREKLAALWRRRIEEAMPLQYLLGTAHWRDLQLQVNPAVLIPRPESEALVDVAVDFCRSCAGARVVDLGTGSGAIAVAVARALPGATVWAVDASEAALVVAGANIERYGLSEQVHLLRGNWFVPLPTQPFDAVLSNPPYIPSAEIAALMPEVRLHEPLSALDGGSDGLDAVRQIIADAARHLRPGGILALEVMAGQGPTVVQLLARDSRYGCIRTVRDWAGIERIVVTYAWARGS.

Residues 120-124 (GTGSG), Asp-143, Trp-172, and Asn-187 contribute to the S-adenosyl-L-methionine site. Residue 187–190 (NPPY) coordinates substrate.

The protein belongs to the protein N5-glutamine methyltransferase family. PrmC subfamily.

The catalysed reaction is L-glutaminyl-[peptide chain release factor] + S-adenosyl-L-methionine = N(5)-methyl-L-glutaminyl-[peptide chain release factor] + S-adenosyl-L-homocysteine + H(+). Its function is as follows. Methylates the class 1 translation termination release factors RF1/PrfA and RF2/PrfB on the glutamine residue of the universally conserved GGQ motif. The polypeptide is Release factor glutamine methyltransferase (Gloeobacter violaceus (strain ATCC 29082 / PCC 7421)).